A 309-amino-acid chain; its full sequence is Coproporphyrin III ferrochelatase (309 aa).

Fe-coproporphyrin III-binding positions include tyrosine 12, arginine 29, 45–46 (RY), serine 53, and tyrosine 124. Residues histidine 182 and glutamate 263 each contribute to the Fe(2+) site.

Belongs to the ferrochelatase family.

The protein localises to the cytoplasm. It catalyses the reaction Fe-coproporphyrin III + 2 H(+) = coproporphyrin III + Fe(2+). It functions in the pathway porphyrin-containing compound metabolism; protoheme biosynthesis. Involved in coproporphyrin-dependent heme b biosynthesis. Catalyzes the insertion of ferrous iron into coproporphyrin III to form Fe-coproporphyrin III. The polypeptide is Coproporphyrin III ferrochelatase (Listeria monocytogenes serotype 4b (strain F2365)).